The sequence spans 437 residues: MELNGPPSSQVPHTPTCAPSLPITVAGTLLRGPQLLLRAAEKYPRTPKCARCRNHGVVSALKGHKRYCRWKDCMCAKCTLIAERQRVMAAQVALRRQQAQEENEARELQLLYGTAEGLALAAANGILPPRPAYEVFGSLCGEGGTDSKIQKFDLFPKSLIPRSMTPQLPSGGKPGSPDSEPVSGSAPGASSPEAQPGSGSENGDGESLLSSPISKELKEGEESPSLISPLSSESGSDAEKDEQDPSSSSLARQRTPINILTRVFPAQKRSVLELVLQGCGGDVVQAIEQILNNRSQDKGEGTWSKDGALQSIQPSVSSTHRPLIAGALTPAIGTIGSRSAFSPLQPNAAHFGTEANTYQLGGHIGLNPLRLAYSAHSRGLAFMAPYSTAGFMPTLGFRPPMDYAFSDLMRDRANVHKDQVYTNGLYGPVVNNNAEKQ.

The segment at residues 49 to 96 (CARCRNHGVVSALKGHKRYCRWKDCMCAKCTLIAERQRVMAAQVALRR) is a DNA-binding region (DM). Residues 160–253 (IPRSMTPQLP…DPSSSSLARQ (94 aa)) form a disordered region. Low complexity-rich tracts occupy residues 179–201 (SEPV…SGSE) and 223–235 (SPSL…SESG). Residues 254–289 (RTPINILTRVFPAQKRSVLELVLQGCGGDVVQAIEQ) form the DMA domain.

This sequence belongs to the DMRT family.

The protein resides in the nucleus. In terms of biological role, may be involved in sexual development. This chain is Doublesex- and mab-3-related transcription factor A2 (dmrta2), found in Xenopus laevis (African clawed frog).